A 227-amino-acid chain; its full sequence is Probable septum site-determining protein MinC (227 aa).

The protein belongs to the MinC family. Interacts with MinD and FtsZ.

Cell division inhibitor that blocks the formation of polar Z ring septums. Rapidly oscillates between the poles of the cell to destabilize FtsZ filaments that have formed before they mature into polar Z rings. Prevents FtsZ polymerization. This chain is Probable septum site-determining protein MinC, found in Bacillus pumilus (strain SAFR-032).